Here is a 308-residue protein sequence, read N- to C-terminus: Cytochrome b (308 aa).

4 helical membrane passes run 1–21 (SGSL…FLAA), 45–66 (WLIR…YLHI), 81–101 (WNIG…GYVL), and 146–166 (FFAL…VHLT). Residues H51 and H65 each contribute to the heme b site. Heme b-binding residues include H150 and H164. H169 serves as a coordination point for a ubiquinone. The next 3 membrane-spanning stretches (helical) occupy residues 194–214 (TKDV…ALFS), 256–276 (LGGV…PLLH), and 288–308 (LSQI…WVGS).

It belongs to the cytochrome b family. The cytochrome bc1 complex contains 11 subunits: 3 respiratory subunits (MT-CYB, CYC1 and UQCRFS1), 2 core proteins (UQCRC1 and UQCRC2) and 6 low-molecular weight proteins (UQCRH/QCR6, UQCRB/QCR7, UQCRQ/QCR8, UQCR10/QCR9, UQCR11/QCR10 and a cleavage product of UQCRFS1). This cytochrome bc1 complex then forms a dimer. Requires heme b as cofactor.

The protein resides in the mitochondrion inner membrane. In terms of biological role, component of the ubiquinol-cytochrome c reductase complex (complex III or cytochrome b-c1 complex) that is part of the mitochondrial respiratory chain. The b-c1 complex mediates electron transfer from ubiquinol to cytochrome c. Contributes to the generation of a proton gradient across the mitochondrial membrane that is then used for ATP synthesis. The sequence is that of Cytochrome b (MT-CYB) from Garritornis isidorei (Papuan babbler).